Here is a 621-residue protein sequence, read N- to C-terminus: tRNA uridine 5-carboxymethylaminomethyl modification enzyme MnmG (621 aa).

Residue 9 to 14 (GGGHAG) participates in FAD binding. Position 270-284 (270-284 (GPRYCPSIEDKIVKF)) interacts with NAD(+).

The protein belongs to the MnmG family. In terms of assembly, homodimer. Heterotetramer of two MnmE and two MnmG subunits. FAD serves as cofactor.

The protein localises to the cytoplasm. In terms of biological role, NAD-binding protein involved in the addition of a carboxymethylaminomethyl (cmnm) group at the wobble position (U34) of certain tRNAs, forming tRNA-cmnm(5)s(2)U34. The sequence is that of tRNA uridine 5-carboxymethylaminomethyl modification enzyme MnmG from Borreliella afzelii (strain PKo) (Borrelia afzelii).